We begin with the raw amino-acid sequence, 248 residues long: UPF0246 protein MYPE6270 (248 aa).

It belongs to the UPF0246 family.

This Malacoplasma penetrans (strain HF-2) (Mycoplasma penetrans) protein is UPF0246 protein MYPE6270.